We begin with the raw amino-acid sequence, 224 residues long: MVQCLVVDDDSRILNYIASHLQTEHIDAYTQPSGEAALKLLEKQRVDIAVIDIMMDGMDGFQLCNTLKNDYDIPVIMLTARDALSDKERAFISGTDDYVTKPFEVKELIFRIRAVLRRYNINSNSEMTIGNLTLNQSYLELQVSNKTMTLPNKEFQLLFMLATRPKQIFTREQIIEKIWGYDYEGDERTVDVHIKRLRQRLKKLNATLTIETVRGQGYKVENHV.

Residues 3 to 116 (QCLVVDDDSR…ELIFRIRAVL (114 aa)) enclose the Response regulatory domain. 4-aspartylphosphate is present on Asp52. A DNA-binding region (ompR/PhoB-type) is located at residues 124–222 (NSEMTIGNLT…VRGQGYKVEN (99 aa)).

In terms of processing, phosphorylated by HssS.

It is found in the cytoplasm. Functionally, member of the two-component regulatory system HssS/HssR involved in intracellular heme homeostasis and tempering of staphylococcal virulence. Phosphorylated HssR binds to a direct repeat sequence within hrtAB promoter and activates the expression of hrtAB, an efflux pump, in response to extracellular heme, hemin, hemoglobin or blood. The polypeptide is Heme response regulator HssR (hssR) (Staphylococcus aureus (strain bovine RF122 / ET3-1)).